The chain runs to 494 residues: Ketol-acid reductoisomerase (NADP(+)) (494 aa).

A KARI N-terminal Rossmann domain is found at 14-208 (LDQLGRCRFM…GGHRAGVLES (195 aa)). NADP(+)-binding positions include 45-48 (CGAQ), Arg68, Arg76, Ser78, and 108-110 (DKQ). Residue His132 is part of the active site. Gly158 provides a ligand contact to NADP(+). KARI C-terminal knotted domains follow at residues 209 to 344 (SFVA…NYPV) and 345 to 487 (TDVE…MTDM). 4 residues coordinate Mg(2+): Asp217, Glu221, Glu389, and Glu393. Ser414 contacts substrate.

It belongs to the ketol-acid reductoisomerase family. Mg(2+) serves as cofactor.

The catalysed reaction is (2R)-2,3-dihydroxy-3-methylbutanoate + NADP(+) = (2S)-2-acetolactate + NADPH + H(+). The enzyme catalyses (2R,3R)-2,3-dihydroxy-3-methylpentanoate + NADP(+) = (S)-2-ethyl-2-hydroxy-3-oxobutanoate + NADPH + H(+). It functions in the pathway amino-acid biosynthesis; L-isoleucine biosynthesis; L-isoleucine from 2-oxobutanoate: step 2/4. It participates in amino-acid biosynthesis; L-valine biosynthesis; L-valine from pyruvate: step 2/4. In terms of biological role, involved in the biosynthesis of branched-chain amino acids (BCAA). Catalyzes an alkyl-migration followed by a ketol-acid reduction of (S)-2-acetolactate (S2AL) to yield (R)-2,3-dihydroxy-isovalerate. In the isomerase reaction, S2AL is rearranged via a Mg-dependent methyl migration to produce 3-hydroxy-3-methyl-2-ketobutyrate (HMKB). In the reductase reaction, this 2-ketoacid undergoes a metal-dependent reduction by NADPH to yield (R)-2,3-dihydroxy-isovalerate. The protein is Ketol-acid reductoisomerase (NADP(+)) of Photobacterium profundum (strain SS9).